The chain runs to 73 residues: V-type proton ATPase subunit e (73 aa).

Topologically, residues 1–3 are lumenal; it reads MSS. The helical transmembrane segment at 4–24 threads the bilayer; the sequence is FYTVVGVFIVVSAMSVLFWIM. Residues 25–35 lie on the Cytoplasmic side of the membrane; that stretch reads APKNNQAVWRS. A helical membrane pass occupies residues 36 to 56; the sequence is TVILTLAMMFLMWAITFLCQL. The Lumenal portion of the chain corresponds to 57–73; the sequence is HPLVAPRRSDLRPEFAE.

Belongs to the V-ATPase e1/e2 subunit family. In terms of assembly, V-ATPase is a heteromultimeric enzyme composed of a peripheral catalytic V1 complex (components A to H) attached to an integral membrane V0 proton pore complex (components: a, c, c', c'', d, e, f and VOA1).

The protein resides in the vacuole membrane. In terms of biological role, subunit of the V0 complex of vacuolar(H+)-ATPase (V-ATPase), a multisubunit enzyme composed of a peripheral complex (V1) that hydrolyzes ATP and a membrane integral complex (V0) that translocates protons. V-ATPase is responsible for acidifying and maintaining the pH of intracellular compartments. The sequence is that of V-type proton ATPase subunit e (VMA9) from Saccharomyces cerevisiae (strain ATCC 204508 / S288c) (Baker's yeast).